A 548-amino-acid polypeptide reads, in one-letter code: Thermolysin (548 aa).

Residues 1 to 28 (MKMKMKLASFGLAAGLAAQVFLPYNALA) form the signal peptide. The propeptide at 29 to 232 (STEHVTWNQQ…DAAKPGDVKS (204 aa)) is activation peptide. D289, D291, Q293, and D370 together coordinate Ca(2+). H374 is a Zn(2+) binding site. Residue E375 is part of the active site. H378 and E398 together coordinate Zn(2+). 9 residues coordinate Ca(2+): E409, N415, D417, E419, E422, Y425, T426, I429, and D432. H463 acts as the Proton donor in catalysis.

This sequence belongs to the peptidase M4 family. Ca(2+) serves as cofactor. The cofactor is Zn(2+).

Its subcellular location is the secreted. It catalyses the reaction Preferential cleavage: Xaa-|-Leu &gt; Xaa-|-Phe.. Its function is as follows. Extracellular zinc metalloprotease. This chain is Thermolysin (npr), found in Bacillus thermoproteolyticus.